We begin with the raw amino-acid sequence, 500 residues long: Beta-xylosidase (500 aa).

E160 acts as the Proton donor in catalysis. E277 acts as the Nucleophile in catalysis.

This sequence belongs to the glycosyl hydrolase 39 family.

It catalyses the reaction Hydrolysis of (1-&gt;4)-beta-D-xylans, to remove successive D-xylose residues from the non-reducing termini.. The sequence is that of Beta-xylosidase (xynB) from Thermoanaerobacterium saccharolyticum (strain DSM 8691 / JW/SL-YS485).